Reading from the N-terminus, the 316-residue chain is Acetyl-coenzyme A carboxylase carboxyl transferase subunit beta (316 aa).

One can recognise a CoA carboxyltransferase N-terminal domain in the interval Leu-39–Met-308. Cys-43, Cys-46, Cys-62, and Cys-65 together coordinate Zn(2+). Residues Cys-43–Cys-65 form a C4-type zinc finger.

This sequence belongs to the AccD/PCCB family. As to quaternary structure, acetyl-CoA carboxylase is a heterohexamer composed of biotin carboxyl carrier protein (AccB), biotin carboxylase (AccC) and two subunits each of ACCase subunit alpha (AccA) and ACCase subunit beta (AccD). It depends on Zn(2+) as a cofactor.

It is found in the cytoplasm. The enzyme catalyses N(6)-carboxybiotinyl-L-lysyl-[protein] + acetyl-CoA = N(6)-biotinyl-L-lysyl-[protein] + malonyl-CoA. It functions in the pathway lipid metabolism; malonyl-CoA biosynthesis; malonyl-CoA from acetyl-CoA: step 1/1. Component of the acetyl coenzyme A carboxylase (ACC) complex. Biotin carboxylase (BC) catalyzes the carboxylation of biotin on its carrier protein (BCCP) and then the CO(2) group is transferred by the transcarboxylase to acetyl-CoA to form malonyl-CoA. In Nostoc punctiforme (strain ATCC 29133 / PCC 73102), this protein is Acetyl-coenzyme A carboxylase carboxyl transferase subunit beta.